The chain runs to 356 residues: uncharacterized protein (356 aa).

A run of 3 helical transmembrane segments spans residues 258-275 (SALQ…VFYY), 290-312 (PHWL…TEAL), and 325-347 (LVLL…TLFS).

The protein resides in the cell membrane. This is an uncharacterized protein from Archaeoglobus fulgidus (strain ATCC 49558 / DSM 4304 / JCM 9628 / NBRC 100126 / VC-16).